The sequence spans 452 residues: Keratin, type I cytoskeletal 15 (452 aa).

The interval M1–N97 is head. A phosphoserine mark is found at S15, S16, S28, S33, and S47. The coil 1A stretch occupies residues E98–W133. Positions E98–M410 constitute an IF rod domain. T124 is subject to Phosphothreonine. The segment at Y134 to T152 is linker 1. The segment at M153–F244 is coil 1B. The tract at residues S245–L264 is linker 12. The interval T265–Q406 is coil 2. K293 participates in a covalent cross-link: Glycyl lysine isopeptide (Lys-Gly) (interchain with G-Cter in SUMO2). Residues T294 and T316 each carry the phosphothreonine modification. The segment at D407–I452 is tail. The segment at I413–I452 is disordered. K443 participates in a covalent cross-link: Glycyl lysine isopeptide (Lys-Gly) (interchain with G-Cter in SUMO1); alternate. K443 is covalently cross-linked (Glycyl lysine isopeptide (Lys-Gly) (interchain with G-Cter in SUMO2); alternate).

Belongs to the intermediate filament family. Heterotetramer of two type I and two type II keratins. Forms a heterodimer with KRT14. Interacts with PLEC isoform 1C, when in a heterodimer with KRT14. Interacts with NOD2. Expressed strongly in the basal cell layer at the tips of rete-like prominences (RLPs) of adult dorsal tongue, outer root sheath (ORS) of hair follicle and skin epidermis (at protein level).

In terms of biological role, in the absence of KRT14, makes a bona fide, but ultrastructurally distinct keratin filament network with KRT5. This Mus musculus (Mouse) protein is Keratin, type I cytoskeletal 15 (Krt15).